The primary structure comprises 272 residues: Probable nitrilase C965.09 (272 aa).

Residues 3–244 (ANIACVQMAP…EGVISYTVDL (242 aa)) enclose the CN hydrolase domain. The Proton acceptor role is filled by Glu-45. The active-site Proton donor is the Lys-118. Catalysis depends on Cys-150, which acts as the Nucleophile.

Belongs to the carbon-nitrogen hydrolase superfamily.

The protein localises to the cytoplasm. The protein resides in the nucleus. In Schizosaccharomyces pombe (strain 972 / ATCC 24843) (Fission yeast), this protein is Probable nitrilase C965.09.